Reading from the N-terminus, the 353-residue chain is MSYQVTIEPIGTTIEVEEDQTILDAALRQGVWLPFACGHGTCGTCKVQVTDGFYDVGEASPFALMDIERDENKVLACCCKPQSDMVIEADVDEDPDFLGHLVQDYQATVIEIKDLSPTIKGIRLQLDRPIEFQAGQYINVQFPNIEGTRAFSIANSPSEVGIVELHIRKVEGGAATTYVHEQLATGDQLDISGPYGQFFVRKSDDQNAIFIAGGSGLSSPQSMILDLLESGDSRTIYLFQGARDLAELYNRELFEQLVKDYPNFRYIPALNAPKPEDQWTGFTGFVHEAVADYFENRCGGHKAYLCGPPIMIDSAISTLMQSRLFERDIHTERFLSAADGAAGQSRSALFKHI.

Residues 3 to 93 form the 2Fe-2S ferredoxin-type domain; that stretch reads YQVTIEPIGT…DMVIEADVDE (91 aa). [2Fe-2S] cluster-binding residues include cysteine 37, cysteine 42, cysteine 45, and cysteine 77. The 100-residue stretch at 102–201 folds into the FAD-binding FR-type domain; it reads VQDYQATVIE…SGPYGQFFVR (100 aa).

The multicomponent enzyme phenol hydroxylase is formed by P0, P1, P2, P3, P4 and P5 polypeptides. Requires FAD as cofactor. [2Fe-2S] cluster is required as a cofactor.

The enzyme catalyses phenol + NADPH + O2 + H(+) = catechol + NADP(+) + H2O. The protein operates within aromatic compound metabolism; phenol degradation. In terms of biological role, catabolizes phenol, and some of its methylated derivatives. P5 is required for growth on phenol, and for in vitro phenol hydroxylase activity. Its function is as follows. Probable electron transfer from NADPH, via FAD and the 2Fe-2S center, to the oxygenase activity site of the enzyme. The sequence is that of Phenol hydroxylase P5 protein (mphP) from Acinetobacter pittii (strain PHEA-2).